Reading from the N-terminus, the 77-residue chain is Acyl carrier protein (77 aa).

The 76-residue stretch at 1–76 (MENFDKVKDI…DAVNFINNLE (76 aa)) folds into the Carrier domain. Ser-36 carries the O-(pantetheine 4'-phosphoryl)serine modification.

It belongs to the acyl carrier protein (ACP) family. 4'-phosphopantetheine is transferred from CoA to a specific serine of apo-ACP by AcpS. This modification is essential for activity because fatty acids are bound in thioester linkage to the sulfhydryl of the prosthetic group.

It is found in the cytoplasm. Its pathway is lipid metabolism; fatty acid biosynthesis. In terms of biological role, carrier of the growing fatty acid chain in fatty acid biosynthesis. The chain is Acyl carrier protein from Staphylococcus carnosus (strain TM300).